Here is a 361-residue protein sequence, read N- to C-terminus: Molybdopterin synthase catalytic subunit (361 aa).

Substrate-binding positions include 101–102, K117, and 124–126; these read HR and KKE.

It belongs to the MoaE family. MOCS2B subfamily. In terms of assembly, heterotetramer; composed of 2 small (Mocs2A) and 2 large (Mocs2B) subunits.

It is found in the cytoplasm. It catalyses the reaction 2 [molybdopterin-synthase sulfur-carrier protein]-C-terminal-Gly-aminoethanethioate + cyclic pyranopterin phosphate + H2O = molybdopterin + 2 [molybdopterin-synthase sulfur-carrier protein]-C-terminal Gly-Gly + 2 H(+). It participates in cofactor biosynthesis; molybdopterin biosynthesis. In terms of biological role, catalytic subunit of the molybdopterin synthase complex, a complex that catalyzes the conversion of precursor Z into molybdopterin. Acts by mediating the incorporation of 2 sulfur atoms from thiocarboxylated Mocs2A into precursor Z to generate a dithiolene group. This chain is Molybdopterin synthase catalytic subunit, found in Drosophila pseudoobscura pseudoobscura (Fruit fly).